The primary structure comprises 228 residues: Upstream activation factor subunit UAF30 (228 aa).

Positions 1 to 56 (MAELNDYSTMIDILLSDMDLETVTTKKVRMALKEVYAIDVESQGKAINKLIRKHLD) constitute a DEK-C domain. The segment covering 89–111 (SKRSSGEEKNDSETKGTHVEKKK) has biased composition (basic and acidic residues). The segment at 89 to 118 (SKRSSGEEKNDSETKGTHVEKKKGTVSKSP) is disordered. An SWIB/MDM2 domain is found at 119 to 195 (ISTRKVTLSK…HKILASHMTE (77 aa)). The disordered stretch occupies residues 209–228 (VRRKEKPIVSDSEQSDTKGI). A phosphoserine mark is found at Ser-218, Ser-220, and Ser-223.

Component of the UAF (upstream activation factor) complex which consists of UAF30, RRN5, RRN9, RRN10, and histones H3 and H4.

It localises to the nucleus. The protein localises to the nucleolus. Functionally, nonessential component of the UAF (upstream activation factor) complex which interacts with the upstream element of the RNA polymerase I promoter and forms a stable preinitiation complex. Together with SPT15/TBP UAF seems to stimulate basal transcription to a fully activated level. UAF30 seems to play a role in silencing transcription by RNA polymerase II. This is Upstream activation factor subunit UAF30 (UAF30) from Saccharomyces cerevisiae (strain ATCC 204508 / S288c) (Baker's yeast).